Reading from the N-terminus, the 173-residue chain is MPKYYCDYCDTYLTHDSPSVRKTHCQGRKHKDNVKFYYQKWMEEQAQHLIDATTAAFKAGKIANPFAPKPGAAIPPPANMQGPPRPVPPGPMGPGPNMLGPGPMGPMGPMMMGPNGPIRGPMAGPIMGPMGPMMGPMGHMGPMMGPIGGPMMSPMRPIMTNMPQPGQPPRAKE.

Residues 4–36 (YYCDYCDTYLTHDSPSVRKTHCQGRKHKDNVKF) form a Matrin-type zinc finger. The segment at 72–100 (AAIPPPANMQGPPRPVPPGPMGPGPNMLG) is disordered. Residues 73–94 (AIPPPANMQGPPRPVPPGPMGP) are compositionally biased toward pro residues.

The protein belongs to the U1 small nuclear ribonucleoprotein C family. U1 snRNP is composed of the 7 core Sm proteins B/B', D1, D2, D3, E, F and G that assemble in a heptameric protein ring on the Sm site of the small nuclear RNA to form the core snRNP, and at least 3 U1 snRNP-specific proteins U1-70K, U1-A and U1-C. U1-C interacts with U1 snRNA and the 5' splice-site region of the pre-mRNA.

The protein localises to the nucleus. In terms of biological role, component of the spliceosomal U1 snRNP, which is essential for recognition of the pre-mRNA 5' splice-site and the subsequent assembly of the spliceosome. U1-C is directly involved in initial 5' splice-site recognition for both constitutive and regulated alternative splicing. The interaction with the 5' splice-site seems to precede base-pairing between the pre-mRNA and the U1 snRNA. Stimulates commitment or early (E) complex formation by stabilizing the base pairing of the 5' end of the U1 snRNA and the 5' splice-site region. The sequence is that of U1 small nuclear ribonucleoprotein C from Pediculus humanus subsp. corporis (Body louse).